The following is a 71-amino-acid chain: Large ribosomal subunit protein uL29 (71 aa).

This sequence belongs to the universal ribosomal protein uL29 family.

This Rickettsia massiliae (strain Mtu5) protein is Large ribosomal subunit protein uL29.